Consider the following 340-residue polypeptide: Protein RecA (340 aa).

67-74 (GNESSGKT) provides a ligand contact to ATP.

This sequence belongs to the RecA family.

It is found in the cytoplasm. Functionally, can catalyze the hydrolysis of ATP in the presence of single-stranded DNA, the ATP-dependent uptake of single-stranded DNA by duplex DNA, and the ATP-dependent hybridization of homologous single-stranded DNAs. It interacts with LexA causing its activation and leading to its autocatalytic cleavage. In Mycoplasma genitalium (strain ATCC 33530 / DSM 19775 / NCTC 10195 / G37) (Mycoplasmoides genitalium), this protein is Protein RecA.